Here is a 1306-residue protein sequence, read N- to C-terminus: Angiotensin-converting enzyme (1306 aa).

Residues 1-28 (MGAASGRRSPPLLLPLLLLLLPPPPVIL) form the signal peptide. Over 29–1256 (ELDPALQPGN…GLNLEEQQAR (1228 aa)) the chain is Extracellular. Peptidase M2 domains are found at residues 40–624 (PADE…LGWP) and 643–1222 (VSDE…LGWP). 5 N-linked (GlcNAc...) asparagine glycosylation sites follow: asparagine 54, asparagine 74, asparagine 111, asparagine 146, and asparagine 160. The cysteines at positions 157 and 165 are disulfide-linked. Residue tyrosine 231 participates in chloride binding. Asparagine 318 carries N-linked (GlcNAc...) asparagine glycosylation. Cysteine 359 and cysteine 377 form a disulfide bridge. Histidine 390 is a binding site for Zn(2+). Catalysis depends on glutamate 391, which acts as the Proton acceptor 1. Positions 394 and 418 each coordinate Zn(2+). Residues asparagine 445 and asparagine 509 are each glycosylated (N-linked (GlcNAc...) asparagine). Histidine 520 (proton donor 1) is an active-site residue. Asparagine 523 carries N-linked (GlcNAc...) asparagine glycosylation. Arginine 529 serves as a coordination point for chloride. A disulfide bridge connects residues cysteine 545 and cysteine 557. N-linked (GlcNAc...) asparagine glycosylation is found at asparagine 673, asparagine 695, asparagine 714, and asparagine 760. Cysteine 757 and cysteine 763 are oxidised to a cystine. Residues arginine 791 and tyrosine 829 each contribute to the chloride site. Asparagine 942 carries an N-linked (GlcNAc...) asparagine glycan. A disulfide bridge links cysteine 957 with cysteine 975. Residue histidine 988 participates in Zn(2+) binding. Residue glutamate 989 is the Proton acceptor 2 of the active site. Residues histidine 992 and glutamate 1016 each contribute to the Zn(2+) site. Chloride contacts are provided by tryptophan 1090 and arginine 1094. The active-site Proton donor 2 is the histidine 1118. Arginine 1127 provides a ligand contact to chloride. A disulfide bridge connects residues cysteine 1143 and cysteine 1155. N-linked (GlcNAc...) asparagine glycosylation is found at asparagine 1191 and asparagine 1225. The juxtamembrane stalk stretch occupies residues 1215 to 1256 (HGEKLGWPQYNWTPNSARLEGPFVGSGRVNFLGLNLEEQQAR). The chain crosses the membrane as a helical span at residues 1257–1277 (VGQWVLLFLGVALLVATLGLT). Topologically, residues 1278–1306 (QRLFSIRHHSLRRPHRGPQFGSEVELRHS) are cytoplasmic. Phosphoserine is present on serine 1299.

Belongs to the peptidase M2 family. As to quaternary structure, monomer and homodimer; homodimerizes following binding to an inhibitor. Interacts with calmodulin (CALM1, CALM2 or CALM3); interaction takes place in the cytoplasmic region and regulates phosphorylation and proteolytic cleavage. Requires Zn(2+) as cofactor. Chloride serves as cofactor. In terms of processing, produced following proteolytic cleavage by secretase enzymes that cleave the transmembrane form in the juxtamembrane stalk region upstream of the transmembrane region. Cleavage can take place at different sites of the juxtamembrane stalk region. Post-translationally, phosphorylated by CK2 on Ser-1299; which allows membrane retention. Phosphorylated on tyrosine residues on its extracellular part, promoting cleavage by secretase enzymes and formation of the soluble form (Angiotensin-converting enzyme, soluble form).

It localises to the cell membrane. The protein resides in the cytoplasm. Its subcellular location is the secreted. The enzyme catalyses Release of a C-terminal dipeptide, oligopeptide-|-Xaa-Yaa, when Xaa is not Pro, and Yaa is neither Asp nor Glu. Thus, conversion of angiotensin I to angiotensin II, with increase in vasoconstrictor activity, but no action on angiotensin II.. The catalysed reaction is angiotensin I + H2O = L-histidyl-L-leucine + angiotensin II. It catalyses the reaction bradykinin + H2O = L-Phe-L-Arg + bradykinin(1-7). It carries out the reaction substance P + H2O = substance P(1-9) + L-Leu-L-Met-NH2. The enzyme catalyses substance P + H2O = substance P(1-8) + Gly-L-Leu-L-Met-NH2. The catalysed reaction is substance P + H2O = L-Phe-L-Phe-Gly-L-Leu-L-Met-NH2 + substance P(1-6). It catalyses the reaction neurotensin + H2O = neurotensin(1-11) + L-isoleucyl-L-leucine. It carries out the reaction goralatide + H2O = N-acetyl-L-seryl-L-aspartate + L-lysyl-L-proline. The enzyme catalyses Met-enkephalin + H2O = L-phenylalanyl-L-methionine + L-tyrosylglycylglycine. The catalysed reaction is Leu-enkephalin + H2O = L-tyrosylglycylglycine + L-phenylalanyl-L-leucine. It catalyses the reaction Met-enkephalin-Arg-Phe + H2O = L-arginyl-L-phenylalanine + Met-enkephalin. With respect to regulation, the dipeptidyl carboxypeptidase activity is strongly activated by chloride. The dipeptidyl carboxypeptidase activity is specifically inhibited by lisinopril, captopril and enalaprilat. Functionally, dipeptidyl carboxypeptidase that removes dipeptides from the C-terminus of a variety of circulating hormones, such as angiotensin I, bradykinin or enkephalins, thereby playing a key role in the regulation of blood pressure, electrolyte homeostasis or synaptic plasticity. Composed of two similar catalytic domains, each possessing a functional active site, with different selectivity for substrates. Plays a major role in the angiotensin-renin system that regulates blood pressure and sodium retention by the kidney by converting angiotensin I to angiotensin II, resulting in an increase of the vasoconstrictor activity of angiotensin. Also able to inactivate bradykinin, a potent vasodilator, and therefore enhance the blood pressure response. Acts as a regulator of synaptic transmission by mediating cleavage of neuropeptide hormones, such as substance P, neurotensin or enkephalins. Catalyzes degradation of different enkephalin neuropeptides (Met-enkephalin, Leu-enkephalin, Met-enkephalin-Arg-Phe and possibly Met-enkephalin-Arg-Gly-Leu). Acts as a regulator of synaptic plasticity in the nucleus accumbens of the brain by mediating cleavage of Met-enkephalin-Arg-Phe, a strong ligand of Mu-type opioid receptor OPRM1, into Met-enkephalin. Met-enkephalin-Arg-Phe cleavage by ACE decreases activation of OPRM1, leading to long-term synaptic potentiation of glutamate release. Also acts as a regulator of hematopoietic stem cell differentiation by mediating degradation of hemoregulatory peptide N-acetyl-SDKP (AcSDKP). Acts as a regulator of cannabinoid signaling pathway by mediating degradation of hemopressin, an antagonist peptide of the cannabinoid receptor CNR1. Involved in amyloid-beta metabolism by catalyzing degradation of Amyloid-beta protein 40 and Amyloid-beta protein 42 peptides, thereby preventing plaque formation. Catalyzes cleavage of cholecystokinin (maturation of Cholecystokinin-8 and Cholecystokinin-5) and Gonadoliberin-1 (both maturation and degradation) hormones. Degradation of hemoregulatory peptide N-acetyl-SDKP (AcSDKP) and amyloid-beta proteins is mediated by the N-terminal catalytic domain, while angiotensin I and cholecystokinin cleavage is mediated by the C-terminal catalytic region. Soluble form that is released in blood plasma and other body fluids following proteolytic cleavage in the juxtamembrane stalk region. In Bos taurus (Bovine), this protein is Angiotensin-converting enzyme.